The chain runs to 649 residues: Vitamin K-dependent protein S (649 aa).

A propeptide spanning residues 1–14 (SKQQASQVLVRKRR) is cleaved from the precursor. Residues 15–60 (ANSMLEETKQGNLERECIEELCNKEEAREVFENDPETDYFYPKYLV) form the Gla domain. 4-carboxyglutamate occurs at positions 20, 21, 28, 30, 33, 34, 39, 40, 43, 46, and 50. Residues cysteine 31 and cysteine 36 are joined by a disulfide bond. The tract at residues 61–89 (CLRSFQSGLFTAARQSTDAYPDLRSCVNA) is thrombin-sensitive. The EGF-like 1 domain maps to 90–128 (IPDQCSPLPCNEDGYMSCKDGKASFTCTCKPGWQGERCE). Intrachain disulfides connect cysteine 94-cysteine 107, cysteine 99-cysteine 116, cysteine 118-cysteine 127, cysteine 134-cysteine 148, cysteine 144-cysteine 157, cysteine 159-cysteine 172, cysteine 178-cysteine 190, cysteine 185-cysteine 199, cysteine 201-cysteine 214, cysteine 220-cysteine 229, cysteine 225-cysteine 238, cysteine 240-cysteine 255, and cysteine 422-cysteine 448. (3R)-3-hydroxyaspartate is present on aspartate 109. Positions 130–173 (DINECKDPSNINGGCSQICDNTPGSYHCSCKSGFVMLSNKKDCK) constitute an EGF-like 2; calcium-binding domain. One can recognise an EGF-like 3; calcium-binding domain in the interval 174–215 (DVDECSLKPNMCGTAVCKNIPGDFECECPEGYRYNLKSKSCE). In terms of domain architecture, EGF-like 4; calcium-binding spans 216–256 (DVDECSENMCAQLCVNYPGGYTCYCDGKKGFKLAQDQKSCE). 2 consecutive Laminin G-like domains span residues 272 to 448 (LLYL…NKHC) and 457 to 639 (YYPG…AHSC). Residues asparagine 472, asparagine 482, and asparagine 503 are each glycosylated (N-linked (GlcNAc...) asparagine). The cysteines at positions 612 and 639 are disulfide-linked.

In terms of processing, the iron and 2-oxoglutarate dependent 3-hydroxylation of aspartate and asparagine is (R) stereospecific within EGF domains. In terms of tissue distribution, plasma.

It localises to the secreted. In terms of biological role, anticoagulant plasma protein; it is a cofactor to activated protein C in the degradation of coagulation factors Va and VIIIa. It helps to prevent coagulation and stimulating fibrinolysis. The sequence is that of Vitamin K-dependent protein S (PROS1) from Macaca mulatta (Rhesus macaque).